The primary structure comprises 154 residues: ISGMSGRKASGSSPTSPINANKVENEDAFLEEVAEEKPHVKPYFTKTILDMDVVEGSAARFDCKVEGYPDPEVMWFKDDNPVKESRHFQIDYDEEGNCSLTISEVCGDDDAKYTCKAVNSLGEATCTAELLVETMGKEGEGEGEGEEDEEEEEE.

Residues isoleucine 1–glutamate 24 form a disordered region. Residues serine 10–asparagine 19 show a composition bias toward polar residues. In terms of domain architecture, Ig-like C2-type spans proline 42–glutamate 133. Residues threonine 134 to glutamate 154 form a disordered region. Over residues glycine 141 to glutamate 154 the composition is skewed to acidic residues.

It belongs to the protein kinase superfamily. CAMK Ser/Thr protein kinase family. As to quaternary structure, binds calmodulin.

Functionally, corresponds to the C-terminus of smooth muscle myosin light chain kinase. In Meleagris gallopavo (Wild turkey), this protein is Telokin.